Here is a 281-residue protein sequence, read N- to C-terminus: Bis(5'-nucleosyl)-tetraphosphatase, symmetrical (281 aa).

This sequence belongs to the Ap4A hydrolase family.

It catalyses the reaction P(1),P(4)-bis(5'-adenosyl) tetraphosphate + H2O = 2 ADP + 2 H(+). In terms of biological role, hydrolyzes diadenosine 5',5'''-P1,P4-tetraphosphate to yield ADP. The protein is Bis(5'-nucleosyl)-tetraphosphatase, symmetrical of Pectobacterium carotovorum subsp. carotovorum (strain PC1).